The sequence spans 263 residues: Ribosomal RNA small subunit methyltransferase A (263 aa).

S-adenosyl-L-methionine-binding residues include Ile18, Gly43, Glu65, Asp91, and Asn110.

This sequence belongs to the class I-like SAM-binding methyltransferase superfamily. rRNA adenine N(6)-methyltransferase family. RsmA subfamily.

The protein resides in the cytoplasm. The catalysed reaction is adenosine(1518)/adenosine(1519) in 16S rRNA + 4 S-adenosyl-L-methionine = N(6)-dimethyladenosine(1518)/N(6)-dimethyladenosine(1519) in 16S rRNA + 4 S-adenosyl-L-homocysteine + 4 H(+). Its function is as follows. Specifically dimethylates two adjacent adenosines (A1518 and A1519) in the loop of a conserved hairpin near the 3'-end of 16S rRNA in the 30S particle. May play a critical role in biogenesis of 30S subunits. This Ehrlichia chaffeensis (strain ATCC CRL-10679 / Arkansas) protein is Ribosomal RNA small subunit methyltransferase A.